We begin with the raw amino-acid sequence, 113 residues long: Nucleoid-associated protein Csac_1593 (113 aa).

Belongs to the YbaB/EbfC family. As to quaternary structure, homodimer.

The protein resides in the cytoplasm. It is found in the nucleoid. Binds to DNA and alters its conformation. May be involved in regulation of gene expression, nucleoid organization and DNA protection. The polypeptide is Nucleoid-associated protein Csac_1593 (Caldicellulosiruptor saccharolyticus (strain ATCC 43494 / DSM 8903 / Tp8T 6331)).